Consider the following 125-residue polypeptide: Cu-Zn superoxide dismutase-like protein OPG175 (125 aa).

A disulfide bridge links Cys52 with Cys102.

It belongs to the Cu-Zn superoxide dismutase family.

The protein localises to the virion. It localises to the host cytoplasm. In terms of biological role, superoxide dismutase-like protein with no enzymatic activity. The protein is Cu-Zn superoxide dismutase-like protein OPG175 (OPG175) of Monkeypox virus.